The chain runs to 141 residues: Hemoglobin subunit alpha (141 aa).

The Globin domain occupies V1–R141. Phosphoserine is present on S3. K7 carries the N6-succinyllysine modification. A Phosphothreonine modification is found at T8. Residue K11 is modified to N6-succinyllysine. K16 carries the N6-acetyllysine; alternate modification. K16 is subject to N6-succinyllysine; alternate. Y24 is subject to Phosphotyrosine. A Phosphoserine modification is found at S35. N6-succinyllysine is present on K40. S49 is subject to Phosphoserine. Residue H58 coordinates O2. H87 serves as a coordination point for heme b. Phosphoserine is present on S102. T108 bears the Phosphothreonine mark. Residues S124 and S131 each carry the phosphoserine modification. A Phosphothreonine modification is found at T134. At S138 the chain carries Phosphoserine.

This sequence belongs to the globin family. In terms of assembly, heterotetramer of two alpha chains and two beta chains. In terms of tissue distribution, red blood cells.

Functionally, involved in oxygen transport from the lung to the various peripheral tissues. In terms of biological role, hemopressin acts as an antagonist peptide of the cannabinoid receptor CNR1. Hemopressin-binding efficiently blocks cannabinoid receptor CNR1 and subsequent signaling. The protein is Hemoglobin subunit alpha (HBA) of Myotis velifer (Mouse-eared bat).